The sequence spans 278 residues: Complement component 1 Q subcomponent-binding protein, mitochondrial (278 aa).

Residues 1-70 (MFQLLRCVPR…PCACGCGCSG (70 aa)) constitute a mitochondrion transit peptide. Residues 73 to 90 (TEGDKAFVDFLSDEIKEE) are C1q binding. Ser-84 carries the post-translational modification Phosphoserine. N6-acetyllysine is present on residues Lys-88 and Lys-91. The interval 136-164 (IPPAFGGEEEEPSQGQKAEEQEPELTSTP) is disordered. An interaction with MAVS region spans residues 166 to 209 (FVVEVTKDGSSKALVLDCHYPEDEIGQEDDQSDIFSIKEVSFQA). Tyr-185 carries the post-translational modification Phosphotyrosine. 2 positions are modified to phosphoserine: Ser-197 and Ser-201. Position 210 is a phosphothreonine (Thr-210).

The protein belongs to the MAM33 family. In terms of assembly, homotrimer; three monomers form a donut-shaped structure with an unusually asymmetric charge distribution on the surface. Interacts with CDK13, HRK, VTN, NFYB, ADRA1B, FOXC1, DDX21, DDX50, NCL, SRSF1 and SRSF9. Interacts with CD93; the association may represent a cell surface C1q receptor. Interacts with KRT1; the association represents a cell surface kininogen receptor. Interacts with CD209; the interaction is indicative for a C1q:C1QBP:CD209 signaling complex. Interacts with FBL and RRP1; the respective interactions with C1QBP are competitive. Probably associates with the mitoribosome. Interacts with MAVS; the interaction occurs upon viral transfection. Interacts with PPIF. Interacts with U2AF1L4. Interacts with PLEKHN1. Interacts with VGF-derived peptide TLQP-21. Interacts with MRE11 and RAD50; forming the MRC (MRE11-RAD50-C1QBP) complex that inhibits the activity of MRE11.

The protein localises to the mitochondrion matrix. The protein resides in the nucleus. It localises to the cell membrane. Its subcellular location is the secreted. It is found in the cytoplasm. The protein localises to the nucleolus. Multifunctional and multicompartmental protein involved in inflammation and infection processes, ribosome biogenesis, protein synthesis in mitochondria, regulation of apoptosis, transcriptional regulation and pre-mRNA splicing. At the cell surface is thought to act as an endothelial receptor for plasma proteins of the complement and kallikrein-kinin cascades. Putative receptor for C1q; specifically binds to the globular 'heads' of C1q thus inhibiting C1; may perform the receptor function through a complex with C1qR/CD93. In complex with cytokeratin-1/KRT1 is a high affinity receptor for kininogen-1/HMWK. Can also bind other plasma proteins, such as coagulation factor XII leading to its autoactivation. May function to bind initially fluid kininogen-1 to the cell membrane. The secreted form may enhance both extrinsic and intrinsic coagulation pathways. It is postulated that the cell surface form requires docking with transmembrane proteins for downstream signaling which might be specific for a cell-type or response. By acting as C1q receptor is involved in chemotaxis of immature dendritic cells and neutrophils and is proposed to signal through CD209/DC-SIGN on immature dendritic cells, through integrin alpha-4/beta-1 during trophoblast invasion of the decidua, and through integrin beta-1 during endothelial cell adhesion and spreading. Signaling involved in inhibition of innate immune response is implicating the PI3K-AKT/PKB pathway. Required for protein synthesis in mitochondria. In mitochondrial translation may be involved in formation of functional 55S mitoribosomes; the function seems to involve its RNA-binding activity. Acts as a RNA modification reader, which specifically recognizes and binds mitochondrial RNAs modified by C5-methylcytosine (m5C) in response to stress, and promotes recruitment of the mitochondrial degradosome complex, leading to their degradation. May be involved in the nucleolar ribosome maturation process; the function may involve the exchange of FBL for RRP1 in the association with pre-ribosome particles. Involved in regulation of RNA splicing by inhibiting the RNA-binding capacity of SRSF1 and its phosphorylation. Is required for the nuclear translocation of splicing factor U2AF1L4. Involved in regulation of CDKN2A- and HRK-mediated apoptosis. Stabilizes mitochondrial CDKN2A isoform smARF. May be involved in regulation of FOXC1 transcriptional activity and NFY/CCAAT-binding factor complex-mediated transcription. May play a role in antibacterial defense as it can bind to cell surface hyaluronan and inhibit Streptococcus pneumoniae hyaluronate lyase. May be involved in modulation of the immune response; ligation by HCV core protein is resulting in suppression of interleukin-12 production in monocyte-derived dendritic cells. Involved in regulation of antiviral response by inhibiting RIGI- and IFIH1-mediated signaling pathways probably involving its association with MAVS after viral infection. Acts as a regulator of DNA repair via homologous recombination by inhibiting the activity of MRE11: interacts with unphosphorylated MRE11 and RAD50 in absence of DNA damage, preventing formation and activity of the MRN complex. Following DNA damage, dissociates from phosphorylated MRE11, allowing formation of the MRN complex. The chain is Complement component 1 Q subcomponent-binding protein, mitochondrial (C1QBP) from Bos taurus (Bovine).